A 201-amino-acid polypeptide reads, in one-letter code: ADP-ribosylation factor-like protein 4D (201 aa).

Gly2 carries N-myristoyl glycine lipidation. GTP is bound by residues 28 to 35, 76 to 80, and 135 to 138; these read GLDSAGKT, DVGGQ, and NKQD.

It belongs to the small GTPase superfamily. Arf family. As to quaternary structure, interacts with CYTH2; the interaction is direct and ARL4D GTP-dependent. Does not interact with ARL4D.

Its subcellular location is the nucleus. The protein localises to the nucleolus. The protein resides in the cell membrane. It is found in the cytoplasm. Its function is as follows. Small GTP-binding protein which cycles between an inactive GDP-bound and an active GTP-bound form, and the rate of cycling is regulated by guanine nucleotide exchange factors (GEF) and GTPase-activating proteins (GAP). GTP-binding protein that does not act as an allosteric activator of the cholera toxin catalytic subunit. Recruits CYTH1, CYTH2, CYTH3 and CYTH4 to the plasma membrane in GDP-bound form. The protein is ADP-ribosylation factor-like protein 4D (ARL4D) of Homo sapiens (Human).